The sequence spans 227 residues: Leucyl/phenylalanyl-tRNA--protein transferase (227 aa).

It belongs to the L/F-transferase family.

The protein resides in the cytoplasm. The enzyme catalyses N-terminal L-lysyl-[protein] + L-leucyl-tRNA(Leu) = N-terminal L-leucyl-L-lysyl-[protein] + tRNA(Leu) + H(+). It carries out the reaction N-terminal L-arginyl-[protein] + L-leucyl-tRNA(Leu) = N-terminal L-leucyl-L-arginyl-[protein] + tRNA(Leu) + H(+). The catalysed reaction is L-phenylalanyl-tRNA(Phe) + an N-terminal L-alpha-aminoacyl-[protein] = an N-terminal L-phenylalanyl-L-alpha-aminoacyl-[protein] + tRNA(Phe). In terms of biological role, functions in the N-end rule pathway of protein degradation where it conjugates Leu, Phe and, less efficiently, Met from aminoacyl-tRNAs to the N-termini of proteins containing an N-terminal arginine or lysine. This chain is Leucyl/phenylalanyl-tRNA--protein transferase, found in Desulfotalea psychrophila (strain LSv54 / DSM 12343).